Reading from the N-terminus, the 414-residue chain is Tyrosine--tRNA ligase (414 aa).

Tyr-38 is an L-tyrosine binding site. The 'HIGH' region signature appears at 43 to 52 (PTATSLHLGN). 2 residues coordinate L-tyrosine: Tyr-165 and Gln-169. Positions 228 to 232 (KFGKS) match the 'KMSKS' region motif. Lys-231 is an ATP binding site. Positions 349 to 414 (FNANQIIDLG…KKYFFMIELI (66 aa)) constitute an S4 RNA-binding domain.

This sequence belongs to the class-I aminoacyl-tRNA synthetase family. TyrS type 1 subfamily. In terms of assembly, homodimer.

The protein localises to the cytoplasm. It catalyses the reaction tRNA(Tyr) + L-tyrosine + ATP = L-tyrosyl-tRNA(Tyr) + AMP + diphosphate + H(+). Catalyzes the attachment of tyrosine to tRNA(Tyr) in a two-step reaction: tyrosine is first activated by ATP to form Tyr-AMP and then transferred to the acceptor end of tRNA(Tyr). This is Tyrosine--tRNA ligase from Mesomycoplasma hyopneumoniae (strain 7448) (Mycoplasma hyopneumoniae).